A 264-amino-acid polypeptide reads, in one-letter code: Phosphoinositide-3-kinase-interacting protein 1 (264 aa).

The N-terminal stretch at 1–21 is a signal peptide; sequence MLLAWVHTFLLSNMLLAEAYG. At 22-170 the chain is on the extracellular side; that stretch reads SGGCFWDNGH…SKEKKDLGTL (149 aa). In terms of domain architecture, Kringle spans 24 to 101; that stretch reads GCFWDNGHLY…EKRPCEDVSC (78 aa). 3 disulfides stabilise this stretch: Cys25–Cys101, Cys46–Cys82, and Cys70–Cys96. The segment at 94-129 is disordered; the sequence is RPCEDVSCPETTSQAPPPSSAMELEEKSGAPGDKEA. Positions 117–129 are enriched in basic and acidic residues; it reads LEEKSGAPGDKEA. The helical transmembrane segment at 171–191 threads the bilayer; the sequence is GYVLGITMMVIILAIGAGIIV. Topologically, residues 192–264 are cytoplasmic; sequence GYTYKRGKDL…LTGQAGTPGA (73 aa).

It is found in the cell membrane. Its function is as follows. Negative regulator of hepatic phosphatidylinositol 3-kinase (PI3K) activity. The sequence is that of Phosphoinositide-3-kinase-interacting protein 1 (Pik3ip1) from Mus musculus (Mouse).